We begin with the raw amino-acid sequence, 339 residues long: Lipoate-protein ligase A (339 aa).

Residues 29 to 217 (PKKQSILFLW…AFFQHYGMKV (189 aa)) form the BPL/LPL catalytic domain. ATP contacts are provided by residues Arg71, 76–79 (GAVF), and Lys135. Lys135 contributes to the (R)-lipoate binding site.

Belongs to the LplA family. Monomer.

The protein localises to the cytoplasm. The enzyme catalyses L-lysyl-[lipoyl-carrier protein] + (R)-lipoate + ATP = N(6)-[(R)-lipoyl]-L-lysyl-[lipoyl-carrier protein] + AMP + diphosphate + H(+). It functions in the pathway protein modification; protein lipoylation via exogenous pathway; protein N(6)-(lipoyl)lysine from lipoate: step 1/2. Its pathway is protein modification; protein lipoylation via exogenous pathway; protein N(6)-(lipoyl)lysine from lipoate: step 2/2. Its function is as follows. Catalyzes both the ATP-dependent activation of exogenously supplied lipoate to lipoyl-AMP and the transfer of the activated lipoyl onto the lipoyl domains of lipoate-dependent enzymes. This is Lipoate-protein ligase A from Blochmanniella pennsylvanica (strain BPEN).